Reading from the N-terminus, the 424-residue chain is Histidine--tRNA ligase (424 aa).

It belongs to the class-II aminoacyl-tRNA synthetase family. Homodimer.

It is found in the cytoplasm. The enzyme catalyses tRNA(His) + L-histidine + ATP = L-histidyl-tRNA(His) + AMP + diphosphate + H(+). This Shewanella amazonensis (strain ATCC BAA-1098 / SB2B) protein is Histidine--tRNA ligase.